We begin with the raw amino-acid sequence, 130 residues long: Small ribosomal subunit protein uS9 (130 aa).

Belongs to the universal ribosomal protein uS9 family.

This is Small ribosomal subunit protein uS9 from Desulfovibrio desulfuricans (strain ATCC 27774 / DSM 6949 / MB).